The primary structure comprises 354 residues: Ubiquitin-conjugating enzyme E2 Z (354 aa).

Residues 1–21 (MAESPTEEAATAGAGAAGPGA) form a disordered region. Residues 99 to 253 (QCLLRIKRDI…IRHETIRVAV (155 aa)) form the UBC core domain. The Glycyl thioester intermediate role is filled by Cys188. Residues 332 to 354 (NAEMDSDSSSSGTETDLHGSLRV) form a disordered region. Ser337 is modified (phosphoserine).

This sequence belongs to the ubiquitin-conjugating enzyme family. As to expression, widely expressed. Highly in placenta, pancreas, spleen and testis.

It is found in the cytoplasm. The protein resides in the nucleus. It catalyses the reaction S-ubiquitinyl-[E1 ubiquitin-activating enzyme]-L-cysteine + [E2 ubiquitin-conjugating enzyme]-L-cysteine = [E1 ubiquitin-activating enzyme]-L-cysteine + S-ubiquitinyl-[E2 ubiquitin-conjugating enzyme]-L-cysteine.. Its pathway is protein modification; protein ubiquitination. Its function is as follows. Catalyzes the covalent attachment of ubiquitin to other proteins. Specific substrate for UBA6, not charged with ubiquitin by UBE1. May be involved in apoptosis regulation. This chain is Ubiquitin-conjugating enzyme E2 Z (UBE2Z), found in Homo sapiens (Human).